Here is a 979-residue protein sequence, read N- to C-terminus: MLKLIKIEIEGFKSFADPISINFDGSVVGIVGPNGSGKSNINDAIRWVLGEQSAKQLRGLNMDDVIFAGSKTVKPQEKAMVKLTFKNEDAIEETKQIFTISRLLKRGQGTNEYFYNDQPVRYKDIKNLAVESGISKSSLAIISQGTISEIAEATPEQRKAVIEEAAGTSKYKLDKEEAQKKLIRTNDAIDKLQGAIKELERQVNSLDKQASKAKIYLEKSKALESVEVGLIVNDLNFFNEKLNNLNTSLLEVEQQRNDLELNIQTYESSISQTVHFKTEVESSIQEITSKLDNLKNALSEINLQEARIEERRKLIISGEIVVDQKTKIEEIKKQVESLKIQINASKQREIELDQQLTRLNAKANSLKLQENDINKEIGVLLEKKSAAAANINILKQQFENKSFLSKGIKTIKDNSFLFDGYIGLASELFKVESEFSLAIETVLGAALNQIVMKTSEDVLQAIDFLKKNLSGKATFIPLTSIKEREVREDHLLVLKGQKGFLGVAKELIEFDTQFNKLFGFLLGNILVVDNVDNANRIAKILDHKYTIVSLEGDLFRPGGTITGGSKLERTSILNYDIKIKEHTNTLKFAEDQIHDLKIKQQTIYNEIETVNSTIQQVKIEANSINSKLNILNEELNNLKLNASEIFKEQQEDQESLNLSFDSEKLNIEKQISTLTIELNSKKDRLTNLISEQGKGETKKQELDAKLRKLNTQHSDSITEQNRAKFLVEQNQKRLSEHYKLTLEAASEQYSLDLDIEQARHFVDSLKKELKELGNVNLEAITEFEEVNQRYQEKKQYIEELTTAKSKIEEAISDLDKIIINKTTEIVNLVNNEFNMVFQKMFGGGKAEIHFTDKNDILNSGVEISAQPPGKTIKNLRLFSGGEKAIIAISLLFAILKARPIPLCILDEVEAALDESNVIRYVEFLKLLKENTQFLIITHRSGTMSRVDQLLGVTMQKRGVTSIFSVELSKAKEMLKDELK.

33–40 (PNGSGKSN) contributes to the ATP binding site. Residues 169-400 (SKYKLDKEEA…INILKQQFEN (232 aa)) adopt a coiled-coil conformation. Residues 419–538 (DGYIGLASEL…DNVDNANRIA (120 aa)) form the SMC hinge domain. 2 coiled-coil regions span residues 572 to 716 (ILNY…HSDS) and 750 to 818 (SLDL…DKII).

Belongs to the SMC family. Homodimer.

Its subcellular location is the cytoplasm. Its function is as follows. Required for chromosome condensation and partitioning. In Mesomycoplasma hyorhinis (Mycoplasma hyorhinis), this protein is Chromosome partition protein Smc.